The sequence spans 2442 residues: Histone lysine acetyltransferase CREBBP (2442 aa).

Disordered stretches follow at residues 1–40 (MAEN…ENDL) and 74–168 (RGGS…PATS). Ala-2 bears the N-acetylalanine mark. A compositionally biased stretch (polar residues) spans 20–30 (PGFSANDSTDF). At Ser-120 the chain carries Phosphoserine. Over residues 125 to 168 (GDSSTPSLPKQAASTSGPTPPASQALNPQAQKQVGLVTSSPATS) the composition is skewed to polar residues. Position 219 is an omega-N-methylarginine (Arg-219). Residues 226 to 409 (PAPAMQGATS…GKACQVAHCA (184 aa)) form an interaction with SRCAP region. Residues 261–272 (GGMTKMGMTGNT) show a composition bias toward low complexity. A disordered region spans residues 261-290 (GGMTKMGMTGNTSPFGQPFSQTGGQPMGAT). Polar residues predominate over residues 273-284 (SPFGQPFSQTGG). The TAZ-type 1 zinc-finger motif lies at 346–432 (DPEKRKLIQQ…RHDCPVCLPL (87 aa)). Residues His-362, Cys-366, Cys-379, Cys-384, His-393, Cys-397, Cys-403, Cys-408, His-417, Cys-421, Cys-426, and Cys-429 each coordinate Zn(2+). The region spanning 586 to 665 (GVRKGWHEHV…KIYKIQKELE (80 aa)) is the KIX domain. Residues Arg-600 and Arg-624 each carry the asymmetric dimethylarginine modification. N6-acetyllysine is present on Lys-656. Residues 792-825 (FLPQNQFPSSSGAMSVNSVGMGQPATQAGVSQGQ) are compositionally biased toward polar residues. A disordered region spans residues 792-1084 (FLPQNQFPSS…STSPSQPRKK (293 aa)). Composition is skewed to pro residues over residues 846–862 (PCPP…PPPA) and 874–887 (PTPP…PAAP). Residues 894–906 (VSSGQTPTPTPGS) show a composition bias toward polar residues. Composition is skewed to low complexity over residues 909–930 (SAAQ…VTPQ) and 938–957 (PSVA…HTQP). A compositionally biased stretch (polar residues) spans 974–989 (PTPSSVTSAETSSQQP). Lys-999 is covalently cross-linked (Glycyl lysine isopeptide (Lys-Gly) (interchain with G-Cter in SUMO1)). The span at 1012–1022 (AESKGEPRSEM) shows a compositional bias: basic and acidic residues. N6-acetyllysine is present on Lys-1015. The residue at position 1031 (Ser-1031) is a Phosphoserine. Residues 1033–1060 (VKEETDTTEQKSEPMEVEEKKPEVKVEA) are compositionally biased toward basic and acidic residues. Glycyl lysine isopeptide (Lys-Gly) (interchain with G-Cter in SUMO1) cross-links involve residues Lys-1034 and Lys-1057. Residues 1067-1080 (SANGTASQSTSPSQ) show a composition bias toward polar residues. Position 1077 is a phosphoserine (Ser-1077). One can recognise a Bromo domain in the interval 1086-1193 (FKPEELRQAL…EVFEQEIDPV (108 aa)). The tract at residues 1125–1171 (DYFDIVKNPMDLSTIKRKLDTGQYQEPWQYVDDVWLMFNNAWLYNRK) is interaction with histone. The interval 1163 to 1181 (NNAWLYNRKTSRVYKFCSK) is interaction with ASF1A. An N6-acetyllysine modification is found at Lys-1217. Positions 1324–1701 (KFSAKRLQTT…MLVELHTQGQ (378 aa)) constitute a CBP/p300-type HAT domain. A phosphoserine; by IKKA mark is found at Ser-1383 and Ser-1387. The interval 1434 to 1436 (YLD) is interaction with histone. Acetyl-CoA-binding positions include 1435 to 1437 (LDS), 1447 to 1448 (RT), Ile-1494, Arg-1499, and Trp-1503. The stretch at 1548-1575 (NVLEESIKELEQEEEERKKEESTAASET) forms a coiled coil. Over residues 1557-1569 (LEQEEEERKKEES) the composition is skewed to basic and acidic residues. Positions 1557 to 1616 (LEQEEEERKKEESTAASETPEGSQGDSKNAKKKNNKKTNKNKSSISRANKKKPSMPNVSN) are disordered. N6-acetyllysine is present on residues Lys-1584, Lys-1592, Lys-1593, Lys-1596, and Lys-1598. The segment covering 1586–1596 (AKKKNNKKTNK) has biased composition (basic residues). The ZZ-type zinc-finger motif lies at 1703–1751 (RFVYTCNECKHHVETRWHCTVCEDYDLCINCYNTKSHTHKMVKWGLGLD). Positions 1708, 1711, 1721, 1724, 1730, 1733, 1739, and 1741 each coordinate Zn(2+). N6-acetyllysine is present on residues Lys-1742 and Lys-1745. Phosphoserine is present on Ser-1764. The TAZ-type 2 zinc finger occupies 1766–1847 (QESRRLSIQR…KCPVPFCLNI (82 aa)). Residues 1875-1960 (TRNVPQQSLP…QPPPAAVEAA (86 aa)) form a disordered region. Pro residues-rich tracts occupy residues 1901–1913 (PQTP…PQPS) and 1944–1955 (PAPPPPAQPPPA). Ser-2064, Ser-2077, and Ser-2080 each carry phosphoserine. A disordered region spans residues 2112 to 2421 (NQPGMQPQPG…LNTPNRSALS (310 aa)). 4 stretches are compositionally biased toward low complexity: residues 2113 to 2138 (QPGM…HQQP), 2197 to 2217 (QLLQ…QQQQ), 2261 to 2280 (MGQM…PGLG), and 2287 to 2305 (IQQA…KQQI). 2 stretches are compositionally biased toward polar residues: residues 2315–2327 (SPQQ…QPQA) and 2334–2343 (QIATSLSNQV). Residues 2349–2372 (VQSPRPQSQPPHSSPSPRIQPQPS) show a composition bias toward pro residues. Ser-2351 bears the Phosphoserine mark. Polar residues predominate over residues 2411-2421 (QLNTPNRSALS).

In terms of assembly, part of a complex composed of MSX3, CREBBP/CBP AND EP300/p300; the interaction with MSX3 decreases histone acetylation activity. Found in a complex containing NCOA2; NCOA3; IKKA; IKKB and IKBKG. Probably part of a complex with HIF1A and EP300. Interacts with phosphorylated CREB1. Interacts with the C-terminal region of CITED4. The TAZ-type 1 domain interacts with HIF1A. Interacts with SRCAP, CARM1, ELF3, MLLT7/FOXO4, N4BP2, NCOA1, NCOA3, NCOA6, PCAF, DDX5, DDX17, PELP1, PML, SMAD1, SMAD2, SMAD3, SPIB, TRERF1 and ZCCHC12. Interacts with KLF1; the interaction results in acetylation and enhancement of transcriptional activity of KLF1. Interacts with DAXX; the interaction is dependent on CBP sumoylation and results in suppression of the transcriptional activity via recruitment of HDAC2 to DAXX. Interacts with MAF. Interacts with MTDH. Interacts with MAFG; the interaction acetylates MAFG in the basic region and stimulates NFE2 transcriptional activity through increasing its DNA-binding activity. Interacts with IRF2; the interaction acetylates IRF2 and regulates its activity on the H4 promoter. Interacts (via N-terminus) with SS18L1/CREST (via C-terminus). Interacts with IRF3 (when phosphorylated); forming the dsRNA-activated factor 1 (DRAF1), a complex which activates the transcription of the type I interferon genes. Interacts with MECOM. Interacts with CITED1 (via C-terminus) Interacts with GATA1; the interaction results in acetylation and enhancement of transcriptional activity of GATA1. Interacts with FOXO1; the interaction acetylates FOXO1 and inhibits its transcriptional activity. Interacts with NPAS2, CLOCK and BMAL1. Interacts with ASF1A and ASF1B; this promotes histone acetylation. Interacts with acetylated TP53/p53 and with the acetylated histones H3 and H4. Interacts (via transactivation domain and C-terminus) with PCNA; the interaction occurs on chromatin in UV-irradiated damaged cells. Interacts with DHX9 (via N-terminus); this interaction mediates association with RNA polymerase II holoenzyme and stimulates CREB-dependent transcriptional activation. Interacts with SMAD4; negatively regulated by ZBTB7A. Forms a complex with KMT2A and CREB1. Interacts with DDX3X; this interaction may facilitate HNF4A acetylation. Interacts with MSX1; the interaction may inhibit MSX1 autoinactivation. Interacts with MSX3. Interacts with ACSS2. Methylation of the KIX domain by CARM1 blocks association with CREB. This results in the blockade of CREB signaling, and in activation of apoptotic response. In terms of processing, phosphorylated by CHUK/IKKA at Ser-1383 and Ser-1387; these phosphorylations promote cell growth by switching the binding preference of CREBBP from TP53 to NF-kappa-B. Post-translationally, sumoylation negatively regulates transcriptional activity via the recruitment of DAAX. Autoacetylation is required for binding to protein substrates, such as acetylated histones and acetylated TP53/p53. Autoacetylation is induced by glucose and fatty acids. Expressed in hypothalamus and cortex.

The protein resides in the cytoplasm. It is found in the nucleus. The enzyme catalyses L-lysyl-[histone] + acetyl-CoA = N(6)-acetyl-L-lysyl-[histone] + CoA + H(+). It carries out the reaction L-lysyl-[protein] + acetyl-CoA = N(6)-acetyl-L-lysyl-[protein] + CoA + H(+). It catalyses the reaction (S)-lactoyl-CoA + L-lysyl-[protein] = N(6)-[(S)-lactoyl]-L-lysyl-[protein] + CoA + H(+). Acetylates histones, giving a specific tag for transcriptional activation. Mediates acetylation of histone H3 at 'Lys-18' and 'Lys-27' (H3K18ac and H3K27ac, respectively). Also acetylates non-histone proteins, like DDX21, FBL, IRF2, MAFG, NCOA3, POLR1E/PAF53 and FOXO1. Binds specifically to phosphorylated CREB and enhances its transcriptional activity toward cAMP-responsive genes. Acts as a coactivator of ALX1. Acts as a circadian transcriptional coactivator which enhances the activity of the circadian transcriptional activators: NPAS2-BMAL1 and CLOCK-BMAL1 heterodimers. Acetylates PCNA; acetylation promotes removal of chromatin-bound PCNA and its degradation during nucleotide excision repair (NER). Acetylates POLR1E/PAF53, leading to decreased association of RNA polymerase I with the rDNA promoter region and coding region. Acetylates DDX21, thereby inhibiting DDX21 helicase activity. Acetylates FBL, preventing methylation of 'Gln-105' of histone H2A (H2AQ104me). In addition to protein acetyltransferase, can use different acyl-CoA substrates, such as lactoyl-CoA, and is able to mediate protein lactylation. Catalyzes lactylation of MRE11 in response to DNA damage, thereby promoting DNA double-strand breaks (DSBs) via homologous recombination (HR). Functions as a transcriptional coactivator for SMAD4 in the TGF-beta signaling pathway. This chain is Histone lysine acetyltransferase CREBBP (Crebbp), found in Rattus norvegicus (Rat).